We begin with the raw amino-acid sequence, 89 residues long: uncharacterized protein (89 aa).

The N-terminal stretch at Met1–Ser19 is a signal peptide.

This is an uncharacterized protein from Sulfolobus islandicus filamentous virus (isolate Iceland/Hveragerdi) (SIFV).